The following is a 175-amino-acid chain: Ribosome maturation factor RimM (175 aa).

Residues 103 to 175 enclose the PRC barrel domain; that stretch reads EGEYYWSDLI…LLTVDWDPDF (73 aa).

Belongs to the RimM family. In terms of assembly, binds ribosomal protein uS19.

It localises to the cytoplasm. In terms of biological role, an accessory protein needed during the final step in the assembly of 30S ribosomal subunit, possibly for assembly of the head region. Essential for efficient processing of 16S rRNA. May be needed both before and after RbfA during the maturation of 16S rRNA. It has affinity for free ribosomal 30S subunits but not for 70S ribosomes. The chain is Ribosome maturation factor RimM from Nitrosococcus oceani (strain ATCC 19707 / BCRC 17464 / JCM 30415 / NCIMB 11848 / C-107).